Reading from the N-terminus, the 387-residue chain is 3-ketoacyl-CoA thiolase (387 aa).

Residue C91 is the Acyl-thioester intermediate of the active site. Catalysis depends on proton acceptor residues H343 and C373.

It belongs to the thiolase-like superfamily. Thiolase family. As to quaternary structure, heterotetramer of two alpha chains (FadB) and two beta chains (FadA).

The protein localises to the cytoplasm. It carries out the reaction an acyl-CoA + acetyl-CoA = a 3-oxoacyl-CoA + CoA. The protein operates within lipid metabolism; fatty acid beta-oxidation. In terms of biological role, catalyzes the final step of fatty acid oxidation in which acetyl-CoA is released and the CoA ester of a fatty acid two carbons shorter is formed. In Photobacterium profundum (strain SS9), this protein is 3-ketoacyl-CoA thiolase.